The primary structure comprises 364 residues: Chorismate synthase (364 aa).

Arg-47 is an NADP(+) binding site. FMN is bound by residues 124–126, Gly-287, 302–306, and Arg-328; these read RAS and KPTAT.

Belongs to the chorismate synthase family. As to quaternary structure, homotetramer. It depends on FMNH2 as a cofactor.

The catalysed reaction is 5-O-(1-carboxyvinyl)-3-phosphoshikimate = chorismate + phosphate. The protein operates within metabolic intermediate biosynthesis; chorismate biosynthesis; chorismate from D-erythrose 4-phosphate and phosphoenolpyruvate: step 7/7. In terms of biological role, catalyzes the anti-1,4-elimination of the C-3 phosphate and the C-6 proR hydrogen from 5-enolpyruvylshikimate-3-phosphate (EPSP) to yield chorismate, which is the branch point compound that serves as the starting substrate for the three terminal pathways of aromatic amino acid biosynthesis. This reaction introduces a second double bond into the aromatic ring system. The sequence is that of Chorismate synthase from Prochlorococcus marinus (strain MIT 9515).